A 310-amino-acid chain; its full sequence is MRKDRQNKITEVGIYLKDLQNRLCRAFEKEEGESRFQETLWEKPNGGGGRTRLLTEGHVIEQGGVNFSCVYGNQLPPAATQKHPEISGFDFQAEGLSLVIHPRNPYVPTVHANFRFFIAGKDEADPRWWFGGGYDLTPYYGFEEDCRHWHRVAKKACDRFGEAIYPRFKAACDDYFYLKHRNEPRGIGGLFFDDLNEWEFKRCFEFIKILGDSFLEAYLPIMQNRKNHPYGERQREFQLYRRGRYVEFNLLYDRGTRFGLEFGGRTESILMSLPPRVVWRPNWEPEPGSEEARLYEDYLVRRNWVSVSGA.

Ser-97 provides a ligand contact to substrate. A divalent metal cation contacts are provided by His-101 and His-111. The active-site Proton donor is the His-111. Substrate is bound at residue 113-115 (NFR). Residues His-150 and His-180 each coordinate a divalent metal cation. The important for dimerization stretch occupies residues 245–280 (YVEFNLLYDRGTRFGLEFGGRTESILMSLPPRVVWR). Residue 263-265 (GGR) coordinates substrate.

Belongs to the aerobic coproporphyrinogen-III oxidase family. Homodimer. A divalent metal cation serves as cofactor.

Its subcellular location is the cytoplasm. It catalyses the reaction coproporphyrinogen III + O2 + 2 H(+) = protoporphyrinogen IX + 2 CO2 + 2 H2O. The protein operates within porphyrin-containing compound metabolism; protoporphyrin-IX biosynthesis; protoporphyrinogen-IX from coproporphyrinogen-III (O2 route): step 1/1. Functionally, involved in the heme biosynthesis. Catalyzes the aerobic oxidative decarboxylation of propionate groups of rings A and B of coproporphyrinogen-III to yield the vinyl groups in protoporphyrinogen-IX. This is Oxygen-dependent coproporphyrinogen-III oxidase from Coxiella burnetii (strain Dugway 5J108-111).